Reading from the N-terminus, the 368-residue chain is Aminomethyltransferase (368 aa).

The protein belongs to the GcvT family. The glycine cleavage system is composed of four proteins: P, T, L and H.

It catalyses the reaction N(6)-[(R)-S(8)-aminomethyldihydrolipoyl]-L-lysyl-[protein] + (6S)-5,6,7,8-tetrahydrofolate = N(6)-[(R)-dihydrolipoyl]-L-lysyl-[protein] + (6R)-5,10-methylene-5,6,7,8-tetrahydrofolate + NH4(+). Its function is as follows. The glycine cleavage system catalyzes the degradation of glycine. This Xylella fastidiosa (strain M23) protein is Aminomethyltransferase.